A 551-amino-acid chain; its full sequence is Dihydroxy-acid dehydratase (551 aa).

Asp78 lines the Mg(2+) pocket. Cys119 is a [2Fe-2S] cluster binding site. The Mg(2+) site is built by Asp120 and Lys121. The residue at position 121 (Lys121) is an N6-carboxylysine. Cys191 serves as a coordination point for [2Fe-2S] cluster. Glu442 provides a ligand contact to Mg(2+). The active-site Proton acceptor is the Ser468.

The protein belongs to the IlvD/Edd family. Homodimer. Requires [2Fe-2S] cluster as cofactor. The cofactor is Mg(2+).

The catalysed reaction is (2R)-2,3-dihydroxy-3-methylbutanoate = 3-methyl-2-oxobutanoate + H2O. It catalyses the reaction (2R,3R)-2,3-dihydroxy-3-methylpentanoate = (S)-3-methyl-2-oxopentanoate + H2O. It functions in the pathway amino-acid biosynthesis; L-isoleucine biosynthesis; L-isoleucine from 2-oxobutanoate: step 3/4. It participates in amino-acid biosynthesis; L-valine biosynthesis; L-valine from pyruvate: step 3/4. Functions in the biosynthesis of branched-chain amino acids. Catalyzes the dehydration of (2R,3R)-2,3-dihydroxy-3-methylpentanoate (2,3-dihydroxy-3-methylvalerate) into 2-oxo-3-methylpentanoate (2-oxo-3-methylvalerate) and of (2R)-2,3-dihydroxy-3-methylbutanoate (2,3-dihydroxyisovalerate) into 2-oxo-3-methylbutanoate (2-oxoisovalerate), the penultimate precursor to L-isoleucine and L-valine, respectively. The sequence is that of Dihydroxy-acid dehydratase from Halothermothrix orenii (strain H 168 / OCM 544 / DSM 9562).